Reading from the N-terminus, the 682-residue chain is PWWP domain-containing DNA repair factor 3A (682 aa).

At Ser105 the chain carries Phosphoserine. The tract at residues 121-145 (EKTDADVASQVSSAPSPSLLGEDGQ) is disordered. Over residues 127-140 (VASQVSSAPSPSLL) the composition is skewed to low complexity. At Ser168 the chain carries Phosphoserine. 2 disordered regions span residues 179–318 (GPKT…GAAP) and 334–369 (GAGD…EEEP). The span at 203 to 220 (HGQESTTKKRQRNLGEKP) shows a compositional bias: basic and acidic residues. 2 positions are modified to phosphoserine: Ser345 and Ser346. Polar residues predominate over residues 346–357 (SEESTGFKSTHS). The PWWP domain maps to 383 to 444 (VGMLVWLKYQ…KHFDCKEKHA (62 aa)).

This sequence belongs to the PWWP3A family. Interacts with TP53BP1 (via BRCT domain); the interaction is not dependent on its phosphorylation status. Binds nucleosomes. Interacts with trimethylated 'Lys-36' of histone H3 (H3K36me3) (in vitro).

Its subcellular location is the nucleus. In terms of biological role, involved in the DNA damage response pathway by contributing to the maintenance of chromatin architecture. Recruited to the vicinity of DNA breaks by TP53BP1 and plays an accessory role to facilitate damage-induced chromatin changes and promoting chromatin relaxation. Required for efficient DNA repair and cell survival following DNA damage. The chain is PWWP domain-containing DNA repair factor 3A (Pwwp3a) from Mus musculus (Mouse).